The primary structure comprises 201 residues: Probable GTP-binding protein EngB (201 aa).

The region spanning 25-199 is the EngB-type G domain; that stretch reads HGIEIAFIGY…KSKLNFWYEK (175 aa). Residues 33-40, 60-64, 78-81, 145-148, and 178-180 each bind GTP; these read GYSNSGKS, GRTQL, DLPG, TKCD, and FSS. 2 residues coordinate Mg(2+): Ser40 and Thr62.

The protein belongs to the TRAFAC class TrmE-Era-EngA-EngB-Septin-like GTPase superfamily. EngB GTPase family. Requires Mg(2+) as cofactor.

In terms of biological role, necessary for normal cell division and for the maintenance of normal septation. The sequence is that of Probable GTP-binding protein EngB from Buchnera aphidicola subsp. Schizaphis graminum (strain Sg).